The primary structure comprises 468 residues: Uronate isomerase (468 aa).

This sequence belongs to the metallo-dependent hydrolases superfamily. Uronate isomerase family.

The catalysed reaction is D-glucuronate = D-fructuronate. It carries out the reaction aldehydo-D-galacturonate = keto-D-tagaturonate. The protein operates within carbohydrate metabolism; pentose and glucuronate interconversion. The polypeptide is Uronate isomerase (Marinomonas sp. (strain MWYL1)).